The sequence spans 696 residues: Junctophilin-2 (696 aa).

Residues 1 to 674 lie on the Cytoplasmic side of the membrane; the sequence is MSGGRFDFDD…EVEVEEVPNT (674 aa). 6 MORN repeats span residues 14–36, 38–59, 60–79, 82–104, 106–128, and 129–151; these read YCGG…KGQG, YSGS…SGNT, FEGY…TKGR, YKGE…NSGA, YEGT…DGGT, and YQGQ…PYGM. Residues serine 162 and serine 165 each carry the phosphoserine modification. Disordered stretches follow at residues 164–192 and 246–273; these read SSLR…SPPV and LSSG…AAPF. MORN repeat units follow at residues 285-307 and 308-330; these read YMGE…SGLR and YEGE…DGHR. Residues 345–359 carry the Bipartite nuclear localization signal motif; it reads KRRVLPLKSSKVRQK. The segment at 439 to 664 is disordered; that stretch reads NSESLLEPPE…RKEVAQAKEA (226 aa). Phosphoserine is present on residues serine 440, serine 442, and serine 462. Over residues 457-471 the composition is skewed to basic and acidic residues; that stretch reads ERPRESPQLHERETP. A Phosphothreonine modification is found at threonine 470. The span at 474 to 487 shows a compositional bias: pro residues; that stretch reads EGGPPSPAGTPPQP. Residue serine 479 is modified to Phosphoserine. Threonine 483 carries the post-translational modification Phosphothreonine. The Nuclear localization signal signature appears at 488–492; it reads KRPRP. Serine 527 and serine 533 each carry phosphoserine. The segment covering 573–585 has biased composition (acidic residues); that stretch reads PLEDEQEPEPEPE. Phosphoserine is present on residues serine 593, serine 597, and serine 613. Residues 631–644 are compositionally biased toward basic and acidic residues; that stretch reads AEPKAKARKTEARG. The chain crosses the membrane as a helical; Anchor for type IV membrane protein span at residues 675–695; sequence VLICMVILLNIGLAILFVHLL.

The protein belongs to the junctophilin family. Interacts with TRPC3. Interacts with BAG5 and HSPA8; the interaction with HSPA8 is increased in the presence of BAG5. As to quaternary structure, interacts with MEF2C. Post-translationally, proteolytically cleaved by calpain in response to cardiac stress. The major cleavage site takes place at the C-terminus and leads to the release of the Junctophilin-2 N-terminal fragment chain (JP2NT). Phosphorylation on Ser-165, probably by PKC, affects RYR1-mediated calcium ion release, interaction with TRPC3, and skeletal muscle myotubule development. As to expression, abundantly expressed in skeletal muscle and heart. Weak expression in stomach and lung.

It localises to the cell membrane. Its subcellular location is the sarcoplasmic reticulum membrane. The protein resides in the endoplasmic reticulum membrane. The protein localises to the nucleus. Its function is as follows. Membrane-binding protein that provides a structural bridge between the plasma membrane and the sarcoplasmic reticulum and is required for normal excitation-contraction coupling in cardiomyocytes. Provides a structural foundation for functional cross-talk between the cell surface and intracellular Ca(2+) release channels by maintaining the 12-15 nm gap between the sarcolemma and the sarcoplasmic reticulum membranes in the cardiac dyads. Necessary for proper intracellular Ca(2+) signaling in cardiac myocytes via its involvement in ryanodine receptor-mediated calcium ion release. Contributes to the construction of skeletal muscle triad junctions. In terms of biological role, transcription repressor required to safeguard against the deleterious effects of cardiac stress. Generated following cleavage of the Junctophilin-2 chain by calpain in response to cardiac stress in cardiomyocytes. Following cleavage and release from the membrane, translocates to the nucleus, binds DNA and represses expression of genes implicated in cell growth and differentiation, hypertrophy, inflammation and fibrosis. Modifies the transcription profile and thereby attenuates pathological remodeling in response to cardiac stress. Probably acts by competing with MEF2 transcription factors and TATA-binding proteins. The protein is Junctophilin-2 of Mus musculus (Mouse).